A 222-amino-acid polypeptide reads, in one-letter code: Cytidylate kinase 2 (222 aa).

ATP is bound at residue 7-15 (GPSGAGKGT).

It belongs to the cytidylate kinase family. Type 1 subfamily.

Its subcellular location is the cytoplasm. It carries out the reaction CMP + ATP = CDP + ADP. The catalysed reaction is dCMP + ATP = dCDP + ADP. This Haemophilus influenzae (strain ATCC 51907 / DSM 11121 / KW20 / Rd) protein is Cytidylate kinase 2.